A 22-amino-acid chain; its full sequence is thr operon leader peptide (22 aa).

It belongs to the thr operon leader peptide family.

This protein is involved in control of the biosynthesis of threonine. This is thr operon leader peptide from Klebsiella pneumoniae (strain 342).